The chain runs to 286 residues: Phosphatidylglycerol--prolipoprotein diacylglyceryl transferase (286 aa).

The next 4 membrane-spanning stretches (helical) occupy residues 25 to 45 (WYAL…RMLL), 65 to 85 (FILW…VLFY), 103 to 123 (GGMS…LFGW), and 127 to 147 (VPIL…LFLG). Residue Arg148 participates in a 1,2-diacyl-sn-glycero-3-phospho-(1'-sn-glycerol) binding. 3 helical membrane passes run 188-208 (AGLE…AGAL), 212-232 (GLII…GEFF), and 248-268 (MGML…ITTW).

It belongs to the Lgt family.

It is found in the cell inner membrane. It carries out the reaction L-cysteinyl-[prolipoprotein] + a 1,2-diacyl-sn-glycero-3-phospho-(1'-sn-glycerol) = an S-1,2-diacyl-sn-glyceryl-L-cysteinyl-[prolipoprotein] + sn-glycerol 1-phosphate + H(+). It functions in the pathway protein modification; lipoprotein biosynthesis (diacylglyceryl transfer). Functionally, catalyzes the transfer of the diacylglyceryl group from phosphatidylglycerol to the sulfhydryl group of the N-terminal cysteine of a prolipoprotein, the first step in the formation of mature lipoproteins. This Rhodopseudomonas palustris (strain ATCC BAA-98 / CGA009) protein is Phosphatidylglycerol--prolipoprotein diacylglyceryl transferase.